We begin with the raw amino-acid sequence, 200 residues long: 3-isopropylmalate dehydratase small subunit (200 aa).

Belongs to the LeuD family. LeuD type 1 subfamily. In terms of assembly, heterodimer of LeuC and LeuD.

It carries out the reaction (2R,3S)-3-isopropylmalate = (2S)-2-isopropylmalate. Its pathway is amino-acid biosynthesis; L-leucine biosynthesis; L-leucine from 3-methyl-2-oxobutanoate: step 2/4. Functionally, catalyzes the isomerization between 2-isopropylmalate and 3-isopropylmalate, via the formation of 2-isopropylmaleate. The chain is 3-isopropylmalate dehydratase small subunit from Aliivibrio fischeri (strain MJ11) (Vibrio fischeri).